Reading from the N-terminus, the 594-residue chain is Transcriptional repressor p66-beta (594 aa).

Position 17 is a phosphoserine (Ser-17). Glycyl lysine isopeptide (Lys-Gly) (interchain with G-Cter in SUMO2) cross-links involve residues Lys-33 and Lys-66. A disordered region spans residues 62 to 143; the sequence is ELPTKQDGSG…ASSPRSSSRM (82 aa). Positions 74-89 are enriched in basic and acidic residues; sequence GYEEKLNGNLRPHGDN. A Glycyl lysine isopeptide (Lys-Gly) (interchain with G-Cter in SUMO2) cross-link involves residue Lys-98. Residues 109–119 show a composition bias toward basic and acidic residues; the sequence is SARRSEPDRGR. A Phosphothreonine modification is found at Thr-121. Residues Ser-123, Ser-130, Ser-135, and Ser-136 each carry the phosphoserine modification. A compositionally biased stretch (low complexity) spans 130-140; that stretch reads SDNEASSPRSS. Positions 141–195 form a coiled coil; sequence SRMEERLKAANLEMFKGKGMEERQQLIKQLRDELRLEEARLVLLKKLRQSQLQKE. Residue Lys-148 forms a Glycyl lysine isopeptide (Lys-Gly) (interchain with G-Cter in SUMO2) linkage. A CR1; interaction with MBD2 and MBD3 region spans residues 166–191; sequence LIKQLRDELRLEEARLVLLKKLRQSQ. Lys-200 participates in a covalent cross-link: Glycyl lysine isopeptide (Lys-Gly) (interchain with G-Cter in SUMO2). Ser-209 bears the Phosphoserine mark. The tract at residues 214–237 is disordered; that stretch reads SPAHVGQQGLSKLPSRPGAQGIEP. Lys-282 is covalently cross-linked (Glycyl lysine isopeptide (Lys-Gly) (interchain with G-Cter in SUMO2)). A phosphoserine mark is found at Ser-334, Ser-339, and Ser-341. The interval 341-481 is CR2; histone tail-binding; that stretch reads SAMSDAANSQ…QEQEIEQRLQ (141 aa). Residues Lys-354, Lys-455, and Lys-468 each participate in a glycyl lysine isopeptide (Lys-Gly) (interchain with G-Cter in SUMO2) cross-link. The GATA-type zinc finger occupies 415–468; sequence RVEPFVCAQCRTDFTPHWKQEKNGKILCEQCMTSNQKKALKAEHTNRLKNAFVK. A coiled-coil region spans residues 450–483; sequence QKKALKAEHTNRLKNAFVKALQQEQEIEQRLQQQ. Ser-487 is modified (phosphoserine). Lys-499 is covalently cross-linked (Glycyl lysine isopeptide (Lys-Gly) (interchain with G-Cter in SUMO2)).

As to quaternary structure, homooligomer. Component of the nucleosome remodeling and deacetylase (NuRD) repressor complex, composed of core proteins MTA1, MTA2, MTA3, RBBP4, RBBP7, HDAC1, HDAC2, MBD2, MBD3, and peripherally associated proteins CDK2AP1, CDK2AP2, GATAD2A, GATAD2B, CHD3, CHD4 and CHD5. The exact stoichiometry of the NuRD complex is unknown, and some subunits such as MBD2 and MBD3, GATAD2A and GATAD2B, and CHD3, CHD4 and CHD5 define mutually exclusive NuRD complexes. Interacts with MBD2; this is required for the enhancement of MBD2-mediated repression and for targeting to the chromatin. Interacts with MBD3. Component of the MeCP1 histone deacetylase complex. Interacts with histone tails, including that of histones H2A, H2B, H3 and H4. Interacts with ERCC6.

The protein resides in the nucleus speckle. It localises to the nucleus. Its subcellular location is the chromosome. Transcriptional repressor. Acts as a component of the histone deacetylase NuRD complex which participates in the remodeling of chromatin. Enhances MBD2-mediated repression. Efficient repression requires the presence of GATAD2A. Targets MBD3 to discrete loci in the nucleus. May play a role in synapse development. The polypeptide is Transcriptional repressor p66-beta (Gatad2b) (Mus musculus (Mouse)).